The primary structure comprises 117 residues: Gamma-aminobutyric acid receptor-associated protein-like 1 (117 aa).

Residue Gly116 is the site of Phosphatidylethanolamine amidated glycine; alternate attachment. Gly116 carries Phosphatidylserine amidated glycine; alternate lipidation. A propeptide (removed in mature form) is located at residue Lys117.

Belongs to the ATG8 family. In terms of assembly, interacts with ATG13, OPRK1, RB1CC1 and ULK1. Interacts with TP53INP1 and TP53INP2. Directly interacts with SQSTM1. Interacts with ATG3, ATG7 and MAP15. Interacts with TECPR2. Interacts with TBC1D5. Interacts with MAPK15. Interacts with TRIM5. Interacts with MEFV and TRIM21. Interacts with WDFY3. Interacts with the reticulophagy receptor TEX264. Interacts with UBA5. Interacts with KBTBD6 and KBTBD7; the interaction is direct. Interacts with reticulophagy regulators RETREG1, RETREG2 and RETREG3. Interacts with IRGM. Interacts with DNM2. Interacts with NCOA4 (via C-terminus). The precursor molecule is cleaved by ATG4 (ATG4A, ATG4B, ATG4C or ATG4D) to expose the glycine at the C-terminus and form the cytosolic form, GABARAPL1-I. The processed form is then activated by APG7L/ATG7, transferred to ATG3 and conjugated to phosphatidylethanolamine (PE) phospholipid to form the membrane-bound form, GABARAPL1-II. During non-canonical autophagy, the processed form is conjugated to phosphatidylserine (PS) phospholipid. ATG4 proteins also mediate the delipidation of PE-conjugated forms required for GABARAPL1 recycling when autophagosomes fuse with lysosomes. In addition, ATG4B and ATG4D mediate delipidation of ATG8 proteins conjugated to PS during non-canonical autophagy. ATG4B constitutes the major protein for proteolytic activation. ATG4D is the main enzyme for delipidation activity.

It is found in the cytoplasmic vesicle. Its subcellular location is the autophagosome. It localises to the cytoplasmic vesicle membrane. The protein localises to the cytoplasm. The protein resides in the cytoskeleton. It is found in the endoplasmic reticulum. Its subcellular location is the golgi apparatus. Its function is as follows. Ubiquitin-like modifier that increases cell-surface expression of kappa-type opioid receptor through facilitating anterograde intracellular trafficking of the receptor. Involved in formation of autophagosomal vacuoles. While LC3s are involved in elongation of the phagophore membrane, the GABARAP/GATE-16 subfamily is essential for a later stage in autophagosome maturation. Through its interaction with the reticulophagy receptor TEX264, participates in the remodeling of subdomains of the endoplasmic reticulum into autophagosomes upon nutrient stress, which then fuse with lysosomes for endoplasmic reticulum turnover. The sequence is that of Gamma-aminobutyric acid receptor-associated protein-like 1 from Pongo abelii (Sumatran orangutan).